The following is a 528-amino-acid chain: D-3-phosphoglycerate dehydrogenase (528 aa).

NAD(+) is bound by residues 151-152, Asp-171, 230-232, and Asp-256; these read RI and AAR. The active site involves Arg-232. Glu-261 is a catalytic residue. His-279 serves as the catalytic Proton donor. Position 279–282 (279–282) interacts with NAD(+); the sequence is HLGA. Residues 455–528 form the ACT domain; it reads NLVIRYVDQP…ANKLEVVNLS (74 aa).

This sequence belongs to the D-isomer specific 2-hydroxyacid dehydrogenase family.

It catalyses the reaction (2R)-3-phosphoglycerate + NAD(+) = 3-phosphooxypyruvate + NADH + H(+). It carries out the reaction (R)-2-hydroxyglutarate + NAD(+) = 2-oxoglutarate + NADH + H(+). Its pathway is amino-acid biosynthesis; L-serine biosynthesis; L-serine from 3-phospho-D-glycerate: step 1/3. Functionally, catalyzes the reversible oxidation of 3-phospho-D-glycerate to 3-phosphonooxypyruvate, the first step of the phosphorylated L-serine biosynthesis pathway. Also catalyzes the reversible oxidation of 2-hydroxyglutarate to 2-oxoglutarate. This chain is D-3-phosphoglycerate dehydrogenase (serA), found in Mycobacterium leprae (strain TN).